We begin with the raw amino-acid sequence, 185 residues long: Pyruvate/ketoisovalerate oxidoreductases common subunit gamma (185 aa).

Heterotetramer of one alpha, one beta, one delta and one gamma chain.

It catalyses the reaction 2 oxidized [2Fe-2S]-[ferredoxin] + pyruvate + CoA = 2 reduced [2Fe-2S]-[ferredoxin] + acetyl-CoA + CO2 + H(+). The catalysed reaction is 3-methyl-2-oxobutanoate + 2 oxidized [2Fe-2S]-[ferredoxin] + CoA = 2-methylpropanoyl-CoA + 2 reduced [2Fe-2S]-[ferredoxin] + CO2 + H(+). The sequence is that of Pyruvate/ketoisovalerate oxidoreductases common subunit gamma (porG) from Thermococcus litoralis (strain ATCC 51850 / DSM 5473 / JCM 8560 / NS-C).